The following is a 244-amino-acid chain: Ribonuclease PH (244 aa).

Residues R90 and 128–130 each bind phosphate; that span reads GTR.

Belongs to the RNase PH family. Homohexameric ring arranged as a trimer of dimers.

The enzyme catalyses tRNA(n+1) + phosphate = tRNA(n) + a ribonucleoside 5'-diphosphate. Its function is as follows. Phosphorolytic 3'-5' exoribonuclease that plays an important role in tRNA 3'-end maturation. Removes nucleotide residues following the 3'-CCA terminus of tRNAs; can also add nucleotides to the ends of RNA molecules by using nucleoside diphosphates as substrates, but this may not be physiologically important. Probably plays a role in initiation of 16S rRNA degradation (leading to ribosome degradation) during starvation. The polypeptide is Ribonuclease PH (Prochlorococcus marinus (strain MIT 9313)).